Consider the following 317-residue polypeptide: Melanocyte-stimulating hormone receptor (317 aa).

Topologically, residues 1 to 37 (MPMQGAQRRLLGSLNSTPTATPNLGLAANHTGAPCLE) are extracellular. The N-linked (GlcNAc...) asparagine glycan is linked to Asn-29. Residues 38–63 (VSIPDGLFLSLGLVSLVENVLVVAAI) form a helical membrane-spanning segment. Over 64–72 (AKNRNLHSP) the chain is Cytoplasmic. The chain crosses the membrane as a helical span at residues 73–93 (MYCFICCLALSDLLVSGSNML). Topologically, residues 94–118 (EMAVILLLEAGALATRASVVQQLQN) are extracellular. Residues 119–140 (TIDVLTCSSMLCSLCFLGAIAV) traverse the membrane as a helical segment. The Cytoplasmic segment spans residues 141 to 163 (DRYVSIFYALRYHSIVTLPRARR). A helical membrane pass occupies residues 164 to 183 (AIAAIWVASVLSSTLFIAYC). The Extracellular segment spans residues 184–191 (DHAAVLLC). The helical transmembrane segment at 192–211 (LVVFFLAMLVLMAVLYVHML) threads the bilayer. Topologically, residues 212–240 (ARACQHAQGITRLHKRQLPAHQGFGLRGA) are cytoplasmic. Residues 241 to 266 (ATLTILLGIFFLCWGPFFLHLMLVVL) form a helical membrane-spanning segment. Residues 267-279 (CPQHLTCSCIFKN) lie on the Extracellular side of the membrane. Residues 280–300 (FKVFLTLIICNTIIDPLIYAF) traverse the membrane as a helical segment. The Cytoplasmic segment spans residues 301–317 (RSQELCRTLREVLLCSW). Residue Cys-315 is the site of S-palmitoyl cysteine attachment.

This sequence belongs to the G-protein coupled receptor 1 family. In terms of assembly, interacts with MGRN1, but does not undergo MGRN1-mediated ubiquitination; this interaction competes with GNAS-binding and thus inhibits agonist-induced cAMP production. Interacts with OPN3; the interaction results in a decrease in MC1R-mediated cAMP signaling and ultimately a decrease in melanin production in melanocytes.

The protein resides in the cell membrane. In terms of biological role, receptor for MSH (alpha, beta and gamma) and ACTH. The activity of this receptor is mediated by G proteins which activate adenylate cyclase. Mediates melanogenesis, the production of eumelanin (black/brown) and phaeomelanin (red/yellow), via regulation of cAMP signaling in melanocytes. This is Melanocyte-stimulating hormone receptor (MC1R) from Alouatta pigra (Guatemalan howler monkey).